An 89-amino-acid polypeptide reads, in one-letter code: Small ribosomal subunit protein uS15 (89 aa).

Belongs to the universal ribosomal protein uS15 family. As to quaternary structure, part of the 30S ribosomal subunit. Forms a bridge to the 50S subunit in the 70S ribosome, contacting the 23S rRNA.

One of the primary rRNA binding proteins, it binds directly to 16S rRNA where it helps nucleate assembly of the platform of the 30S subunit by binding and bridging several RNA helices of the 16S rRNA. Functionally, forms an intersubunit bridge (bridge B4) with the 23S rRNA of the 50S subunit in the ribosome. The protein is Small ribosomal subunit protein uS15 of Lactiplantibacillus plantarum (strain ATCC BAA-793 / NCIMB 8826 / WCFS1) (Lactobacillus plantarum).